A 269-amino-acid polypeptide reads, in one-letter code: GRF-interacting factor 10 (269 aa).

A disordered region spans residues M1–D71. Residues Q22–G43 show a composition bias toward low complexity. Over residues E47–C69 the composition is skewed to basic and acidic residues. Residues A113–K148 form the QLQ domain. Residues E179–E223 enclose the WRC domain. 2 consecutive short sequence motifs (bipartite nuclear localization signal) follow at residues R184 to R194 and R212 to R216. Residues P217–T269 are disordered. A compositionally biased stretch (basic and acidic residues) spans E243–P253.

Belongs to the GRF family. In terms of assembly, interacts with GIF1. As to expression, highly expressed in shoots. Expressed in developing leaves.

It is found in the nucleus. Involved in the regulation of cell proliferation in developing shoots and leaves. Does not possess transactivation activity. In Zea mays (Maize), this protein is GRF-interacting factor 10.